The primary structure comprises 497 residues: Protein nucleotidyltransferase YdiU (497 aa).

The ATP site is built by Gly-92, Gly-94, Arg-95, Lys-114, Asp-126, Gly-127, Arg-177, and Arg-184. Catalysis depends on Asp-261, which acts as the Proton acceptor. Residues Asn-262 and Asp-271 each coordinate Mg(2+). Asp-271 provides a ligand contact to ATP.

This sequence belongs to the SELO family. Mg(2+) serves as cofactor. Mn(2+) is required as a cofactor.

It carries out the reaction L-seryl-[protein] + ATP = 3-O-(5'-adenylyl)-L-seryl-[protein] + diphosphate. It catalyses the reaction L-threonyl-[protein] + ATP = 3-O-(5'-adenylyl)-L-threonyl-[protein] + diphosphate. The catalysed reaction is L-tyrosyl-[protein] + ATP = O-(5'-adenylyl)-L-tyrosyl-[protein] + diphosphate. The enzyme catalyses L-histidyl-[protein] + UTP = N(tele)-(5'-uridylyl)-L-histidyl-[protein] + diphosphate. It carries out the reaction L-seryl-[protein] + UTP = O-(5'-uridylyl)-L-seryl-[protein] + diphosphate. It catalyses the reaction L-tyrosyl-[protein] + UTP = O-(5'-uridylyl)-L-tyrosyl-[protein] + diphosphate. Its function is as follows. Nucleotidyltransferase involved in the post-translational modification of proteins. It can catalyze the addition of adenosine monophosphate (AMP) or uridine monophosphate (UMP) to a protein, resulting in modifications known as AMPylation and UMPylation. The chain is Protein nucleotidyltransferase YdiU from Bordetella petrii (strain ATCC BAA-461 / DSM 12804 / CCUG 43448).